Here is a 1256-residue protein sequence, read N- to C-terminus: Nephrin (1256 aa).

Positions 1–35 (MGAKEATVRGPGASPVHRTCHLIPLLLAGMLTTGL) are cleaved as a signal peptide. The Extracellular segment spans residues 36–1078 (AQSPVPTSAP…PGPPRLPLLP (1043 aa)). Ig-like C2-type domains lie at 39-144 (PVPT…VILS), 149-247 (PKVL…ASFT), 256-347 (PPVI…RSIT), 354-448 (PSAV…KSLT), 454-554 (PAQK…TQLV), and 558-649 (PPTN…ETVS). Asparagine 54 carries an N-linked (GlcNAc...) asparagine glycan. Intrachain disulfides connect cysteine 67-cysteine 125, cysteine 174-cysteine 231, and cysteine 279-cysteine 331. Residues asparagine 370 and asparagine 415 are each glycosylated (N-linked (GlcNAc...) asparagine). Cysteine 375 and cysteine 431 are oxidised to a cystine. Serine 446 carries the phosphoserine modification. The cysteines at positions 479 and 542 are disulfide-linked. Positions 491–516 (TWLKDSRPVNDPRQSQEPRRVQLGSV) are disordered. The segment covering 494–510 (KDSRPVNDPRQSQEPRR) has biased composition (basic and acidic residues). N-linked (GlcNAc...) asparagine glycosylation is found at asparagine 561, asparagine 578, asparagine 591, and asparagine 722. The cysteines at positions 581 and 637 are disulfide-linked. Ig-like C2-type domains are found at residues 754–846 (PTIR…LVRL) and 852–953 (PQVD…VSIS). 2 cysteine pairs are disulfide-bonded: cysteine 775–cysteine 830 and cysteine 877–cysteine 934. The Fibronectin type-III domain maps to 957 to 1051 (PPLGLKVVSV…GIQVSITTPG (95 aa)). Positions 1048–1071 (TTPGLDQAPEDTDQPLPTEQPPGP) are disordered. A helical transmembrane segment spans residues 1079 to 1099 (VLFAVGGLLLLSNASCVGGLL). Topologically, residues 1100 to 1256 (WRRRLRRLAE…LPFELRGHLV (157 aa)) are cytoplasmic. Residue serine 1112 is modified to Phosphoserine. Basic and acidic residues predominate over residues 1112-1128 (SEKTEAGSEEDRIRNEY). A disordered region spans residues 1112–1143 (SEKTEAGSEEDRIRNEYEESQWTGDRDTRSST). The residue at position 1115 (threonine 1115) is a Phosphothreonine. Serine 1119 is modified (phosphoserine). A Phosphotyrosine; by FYN modification is found at tyrosine 1208.

This sequence belongs to the immunoglobulin superfamily. As to quaternary structure, interacts with NPHS2 and with CD2AP (via C-terminal domain). Interacts with MAGI1 (via PDZ 2 and 3 domains) forming a tripartite complex with IGSF5/JAM4. Forms a complex with ACTN4, CASK, IQGAP1, MAGI2, SPTAN1 and SPTBN1. Interacts with DDN; the interaction is direct. Self-associates (via the Ig-like domains). Also interacts (via the Ig-like domains) with KIRREL1 and KIRREL2; the interaction with KIRREL1 is dependent on KIRREL1 glycosylation. Interacts with KIRREL3. Interacts with phosphatidylinositol 3-kinase regulatory subunit PIK3R1; the interaction is reduced by high glucose levels. Post-translationally, phosphorylated at Tyr-1208 by FYN, leading to the recruitment and activation of phospholipase C-gamma-1/PLCG1. Tyrosine phosphorylation is reduced by high glucose levels. Dephosphorylated by tensin TNS2 which leads to reduced binding of NPHN1 to PIK3R1. As to expression, expressed in kidney glomeruli. In the embryo, expressed in the mesonephric kidney at 11 dpc with strong expression in cranial tubules with podocyte-like structures. Expression is observed in the podocytes of the developing kidney from 13 dpc. High expression is also detected in the developing cerebellum, hindbrain, spinal cord, retina and hypothalamus. Expressed in skeletal muscle during myoblast fusion such as in the adult following acute injury and in the embryo but not detected in uninjured adult skeletal muscle. Isoform 1 and isoform 2 are expressed in the newborn brain and developing cerebellum. Isoform 1 is the predominant isoform in adult kidney.

It is found in the cell membrane. In terms of biological role, seems to play a role in the development or function of the kidney glomerular filtration barrier. Regulates glomerular vascular permeability. May anchor the podocyte slit diaphragm to the actin cytoskeleton. Plays a role in skeletal muscle formation through regulation of myoblast fusion. The polypeptide is Nephrin (Nphs1) (Mus musculus (Mouse)).